The following is a 91-amino-acid chain: Large ribosomal subunit protein bL31 (91 aa).

Residues 62-91 (RRKYSGTKPQQTAKGKKAAPKSTPKTNKKG) are disordered.

This sequence belongs to the bacterial ribosomal protein bL31 family. Type A subfamily. In terms of assembly, part of the 50S ribosomal subunit.

In terms of biological role, binds the 23S rRNA. In Thermosynechococcus vestitus (strain NIES-2133 / IAM M-273 / BP-1), this protein is Large ribosomal subunit protein bL31.